A 474-amino-acid chain; its full sequence is Coiled-coil domain-containing protein 149 (474 aa).

2 coiled-coil regions span residues 1 to 199 and 259 to 286; these read MANQ…RKNS and IQHQ…LEVS. 2 disordered regions span residues 301–388 and 405–474; these read SDPT…EEEV and AELE…TVKT. Residues 323 to 337 show a composition bias toward basic and acidic residues; the sequence is TENKADPKDGEAQKQ. The segment covering 343–353 has biased composition (low complexity); that stretch reads CAAAEALTAPE. Positions 385–414 form a coiled coil; that stretch reads EEEVNSLGREIIKLTKEQAAAELEEVRRES.

The protein belongs to the CCDC149 family.

The chain is Coiled-coil domain-containing protein 149 (CCDC149) from Homo sapiens (Human).